The following is a 293-amino-acid chain: Bifunctional protein FolD (293 aa).

NADP(+) contacts are provided by residues 166–168 (GRS), Ser191, and Ile232.

Belongs to the tetrahydrofolate dehydrogenase/cyclohydrolase family. Homodimer.

It carries out the reaction (6R)-5,10-methylene-5,6,7,8-tetrahydrofolate + NADP(+) = (6R)-5,10-methenyltetrahydrofolate + NADPH. It catalyses the reaction (6R)-5,10-methenyltetrahydrofolate + H2O = (6R)-10-formyltetrahydrofolate + H(+). Its pathway is one-carbon metabolism; tetrahydrofolate interconversion. Catalyzes the oxidation of 5,10-methylenetetrahydrofolate to 5,10-methenyltetrahydrofolate and then the hydrolysis of 5,10-methenyltetrahydrofolate to 10-formyltetrahydrofolate. This is Bifunctional protein FolD from Synechococcus sp. (strain JA-2-3B'a(2-13)) (Cyanobacteria bacterium Yellowstone B-Prime).